Reading from the N-terminus, the 483-residue chain is Altronate oxidoreductase (483 aa).

Residue Ile-18–Ala-29 participates in NAD(+) binding.

Belongs to the mannitol dehydrogenase family. UxaB subfamily.

It catalyses the reaction D-altronate + NAD(+) = keto-D-tagaturonate + NADH + H(+). The protein operates within carbohydrate metabolism; pentose and glucuronate interconversion. The chain is Altronate oxidoreductase from Yersinia pestis.